Consider the following 374-residue polypeptide: Probable quinol oxidase subunit 2 (374 aa).

The signal sequence occupies residues 1-19 (MSKFKSLLLMFGTLILLSG). Cys20 carries N-palmitoyl cysteine lipidation. Cys20 carries the S-diacylglycerol cysteine lipid modification. 2 consecutive transmembrane segments (helical) span residues 43 to 63 (SIIF…IFIF) and 82 to 102 (IETI…IPTV). Residues 321-374 (MKPMILGNNDPYDNEFKKEEDHNSKEMEKISKSAKDENASKFGSKADNDHGGGH) form a disordered region. A compositionally biased stretch (basic and acidic residues) spans 334–374 (NEFKKEEDHNSKEMEKISKSAKDENASKFGSKADNDHGGGH).

Belongs to the cytochrome c oxidase subunit 2 family.

Its subcellular location is the cell membrane. It carries out the reaction 2 a quinol + O2 = 2 a quinone + 2 H2O. In terms of biological role, catalyzes quinol oxidation with the concomitant reduction of oxygen to water. Subunit II transfers the electrons from a quinol to the binuclear center of the catalytic subunit I. In Staphylococcus haemolyticus (strain JCSC1435), this protein is Probable quinol oxidase subunit 2 (qoxA).